Reading from the N-terminus, the 36-residue chain is Potassium channel toxin alpha-KTx 23.1 (36 aa).

4 cysteine pairs are disulfide-bonded: C6–C26, C12–C31, C16–C33, and C21–C36. C36 is subject to Cysteine amide.

It belongs to the short scorpion toxin superfamily. Potassium channel inhibitor family. Alpha-KTx 23 subfamily. Expressed by the venom gland.

Its subcellular location is the secreted. Its function is as follows. Voltage-gated potassium channel inhibitor. Selectively and irreversibly binds (K(d)=2.9 pM) and blocks hKv1.3/KCNA3 potassium channels of human T-lymphocytes. Weakly blocks hKCa3.1/KCNN4, mKv1.1/KCNA1, and hKv1.2/KCNA2 channels. In vivo, high doses (200 ug) produce no symptoms of intoxication when injected into mice. This chain is Potassium channel toxin alpha-KTx 23.1, found in Vaejovis mexicanus smithi (Mexican scorpion).